A 222-amino-acid chain; its full sequence is MDIERVNENTLKLFITYNDIEDRGYSREEIWYNRAKGEQLFWDMIDEVNTEDYFDVEGPIWIHINASEVGLEIIVTRAHILKDGETLDGHSNFDEHKEMFAPFDEVGDDLLSQLTQFGDMDESELFMDTDIYVYKFKDIDELIPVAKRMTDELVDSSLFKYENWYYLVVDFGNADEELNRHDRNAVIKEFLTPSNFTIHRLEEYGEKIMEFNCFETVRKYFA.

The protein belongs to the MecA family. Homodimer.

Its function is as follows. Enables the recognition and targeting of unfolded and aggregated proteins to the ClpC protease or to other proteins involved in proteolysis. This is Adapter protein MecA from Lysinibacillus sphaericus (strain C3-41).